Consider the following 805-residue polypeptide: Leucine--tRNA ligase (805 aa).

Residues Pro-40–His-51 carry the 'HIGH' region motif. A 'KMSKS' region motif is present at residues Lys-576–Ser-580. Lys-579 contacts ATP.

Belongs to the class-I aminoacyl-tRNA synthetase family.

The protein localises to the cytoplasm. It catalyses the reaction tRNA(Leu) + L-leucine + ATP = L-leucyl-tRNA(Leu) + AMP + diphosphate. The sequence is that of Leucine--tRNA ligase from Anoxybacillus flavithermus (strain DSM 21510 / WK1).